The following is a 436-amino-acid chain: 3-ketoacyl-CoA thiolase (436 aa).

Cys-99 functions as the Acyl-thioester intermediate in the catalytic mechanism. Catalysis depends on proton acceptor residues His-392 and Cys-422.

It belongs to the thiolase-like superfamily. Thiolase family. As to quaternary structure, heterotetramer of two alpha chains (FadJ) and two beta chains (FadI).

It localises to the cytoplasm. It carries out the reaction an acyl-CoA + acetyl-CoA = a 3-oxoacyl-CoA + CoA. The protein operates within lipid metabolism; fatty acid beta-oxidation. Functionally, catalyzes the final step of fatty acid oxidation in which acetyl-CoA is released and the CoA ester of a fatty acid two carbons shorter is formed. In Shewanella denitrificans (strain OS217 / ATCC BAA-1090 / DSM 15013), this protein is 3-ketoacyl-CoA thiolase.